The chain runs to 203 residues: Corrinoid adenosyltransferase (203 aa).

Residues 1–21 form a disordered region; that stretch reads MNESPEKDQRHRERMERKKAV. Position 41–47 (41–47) interacts with ATP; it reads GNGKGKS.

The protein belongs to the Cob(I)alamin adenosyltransferase family. In terms of assembly, monomer. Mn(2+) serves as cofactor.

It is found in the cytoplasm. It catalyses the reaction 2 cob(II)yrinate a,c diamide + reduced [electron-transfer flavoprotein] + 2 ATP = 2 adenosylcob(III)yrinate a,c-diamide + 2 triphosphate + oxidized [electron-transfer flavoprotein] + 3 H(+). The enzyme catalyses 2 cob(II)alamin + reduced [electron-transfer flavoprotein] + 2 ATP = 2 adenosylcob(III)alamin + 2 triphosphate + oxidized [electron-transfer flavoprotein] + 3 H(+). Its pathway is cofactor biosynthesis; adenosylcobalamin biosynthesis; adenosylcobalamin from cob(II)yrinate a,c-diamide: step 2/7. Functionally, required for both de novo synthesis of the corrin ring for the assimilation of exogenous corrinoids. Participates in the adenosylation of a variety of incomplete and complete corrinoids. The protein is Corrinoid adenosyltransferase (cobO) of Pseudomonas aeruginosa (strain ATCC 15692 / DSM 22644 / CIP 104116 / JCM 14847 / LMG 12228 / 1C / PRS 101 / PAO1).